Here is a 133-residue protein sequence, read N- to C-terminus: FPRL1 inhibitory protein (133 aa).

A signal peptide spans 1 to 28 (MKKNITKTIIASTVIAAGLLTQTNDAKA).

It belongs to the CHIPS/FLIPr family.

Its subcellular location is the secreted. In terms of biological role, may be involved in countering the first line of host defense mechanisms. Impairs the leukocyte response to FPRL1 agonists by binding directly to host FPRL1. Exerts, in vitro, anti-inflammatory activity by inhibiting calcium mobilization and cell migration toward chemoattractants. The sequence is that of FPRL1 inhibitory protein (flr) from Staphylococcus aureus (strain Newman).